The primary structure comprises 676 residues: uncharacterized protein (676 aa).

This is an uncharacterized protein from Magallana gigas (Pacific oyster).